The following is a 162-amino-acid chain: Xylulose kinase (162 aa).

The interval 16 to 39 (GGHSATPRPATGPAGPAAHSGRHQ) is disordered. A compositionally biased stretch (low complexity) spans 20–33 (ATPRPATGPAGPAA).

Belongs to the FGGY kinase family.

The catalysed reaction is D-xylulose + ATP = D-xylulose 5-phosphate + ADP + H(+). Catalyzes the phosphorylation of D-xylulose to D-xylulose 5-phosphate. In Actinoplanes sp. (strain ATCC 31351 / 3876) (Ampullariella sp.), this protein is Xylulose kinase.